The chain runs to 123 residues: Ribosome-binding factor A (123 aa).

The protein belongs to the RbfA family. As to quaternary structure, monomer. Binds 30S ribosomal subunits, but not 50S ribosomal subunits or 70S ribosomes.

It localises to the cytoplasm. In terms of biological role, one of several proteins that assist in the late maturation steps of the functional core of the 30S ribosomal subunit. Associates with free 30S ribosomal subunits (but not with 30S subunits that are part of 70S ribosomes or polysomes). Required for efficient processing of 16S rRNA. May interact with the 5'-terminal helix region of 16S rRNA. The sequence is that of Ribosome-binding factor A from Lactobacillus johnsonii (strain CNCM I-12250 / La1 / NCC 533).